A 321-amino-acid polypeptide reads, in one-letter code: Fe-S cluster assembly protein DRE2 (321 aa).

Positions 1 to 131 (MERMLLLSPP…KPDFGPENIV (131 aa)) are N-terminal SAM-like domain. The segment at 132–213 (PLKLGKRKPV…EETLLDGEDM (82 aa)) is linker. Positions 223, 234, 237, and 239 each coordinate [2Fe-2S] cluster. The segment at 223-239 (CRPKAGKRRRACKDCTC) is fe-S binding site A. Residues Cys284, Cys287, Cys295, and Cys298 each coordinate [4Fe-4S] cluster. 2 short sequence motifs (cx2C motif) span residues 284–287 (CGNC) and 295–298 (CDGC). Residues 284–298 (CGNCALGDAFRCDGC) are fe-S binding site B.

The protein belongs to the anamorsin family. In terms of assembly, monomer. Interacts with TAH18. Interacts with MIA40. The cofactor is [2Fe-2S] cluster. [4Fe-4S] cluster is required as a cofactor.

It localises to the cytoplasm. It is found in the mitochondrion intermembrane space. Component of the cytosolic iron-sulfur (Fe-S) protein assembly (CIA) machinery required for the maturation of extramitochondrial Fe-S proteins. Part of an electron transfer chain functioning in an early step of cytosolic Fe-S biogenesis, facilitating the de novo assembly of a [4Fe-4S] cluster on the scaffold complex CFD1-NBP35. Electrons are transferred to DRE2 from NADPH via the FAD- and FMN-containing protein TAH18. TAH18-DRE2 are also required for the assembly of the diferric tyrosyl radical cofactor of ribonucleotide reductase (RNR), probably by providing electrons for reduction during radical cofactor maturation in the catalytic small subunit RNR2. The polypeptide is Fe-S cluster assembly protein DRE2 (Coccidioides immitis (strain RS) (Valley fever fungus)).